The following is a 153-amino-acid chain: Small ribosomal subunit protein uS13 (153 aa).

It belongs to the universal ribosomal protein uS13 family. Part of the 30S ribosomal subunit. Forms a loose heterodimer with protein S19. Forms two bridges to the 50S subunit in the 70S ribosome.

Located at the top of the head of the 30S subunit, it contacts several helices of the 16S rRNA. In the 70S ribosome it contacts the 23S rRNA (bridge B1a) and protein L5 of the 50S subunit (bridge B1b), connecting the 2 subunits; these bridges are implicated in subunit movement. This chain is Small ribosomal subunit protein uS13, found in Pyrobaculum islandicum (strain DSM 4184 / JCM 9189 / GEO3).